We begin with the raw amino-acid sequence, 648 residues long: MLYPRAIRLRFACKLTLASVLSLLLGFYFGLPMPRWSALTAALVAAAPAFAAGGEPFSGAIRYRGWLRIIGTVLGSLCALLLMMLLIRAPLLMILLCCLWAGVCTWLSSLVRMENSYALGLSGYTALIIVVSCLGEPQFILQLALERCGEIVLGIVCAVLVDTLLAPRSVKGEVDRVVGGMLLGQLRLLQCCVDGRDGDAIDRSWHRLIRESHTLEEMRASLALESSRWPRACRRLTALHTLSLTLITRACEIFLTQCQTPMALPAPFLALIAAPVDTPEEAYQRLKQLRRLLVAHGEHQLPPALIGWIGGASRLQLLVKGVASNVRIGRYEAATLAHDTAPRPLYSVQGHHALINGLRTWLATSLGALFWLWSGWSAGSGCMIMIAVVTSLAVRTPNPRMAAIDFLMGSLVALPVGALYYTLILPATQQSLVLLCLSLGALTFICGMAVQKRRLGSMGTLASTLNILALSNPMGFPIERFVDSAIGQMVGCLLALVVLLVVHDRSRARTGRALMRHLAFGAVAALRREGTRGNLLPALYRQLLLLLTLFPDDIGRYRLALTLIVLQQRLAHSALPCDAGRLRAIDAAATRLLSGGGSARCSGALLQLTTELGDYADCLARQGIASAVLQPLHQLADVLYRYRSVLLD.

Helical transmembrane passes span 11-31, 41-61, 65-87, 91-110, 125-145, 150-170, 369-389, 406-426, 430-450, 458-478, and 481-501; these read FACK…YFGL, AALV…SGAI, GWLR…MLLI, LLMI…LSSL, TALI…QLAL, EIVL…PRSV, LFWL…IAVV, FLMG…LILP, QSLV…GMAV, MGTL…GFPI, and FVDS…VLLV.

Belongs to the aromatic acid exporter ArAE (TC 2.A.85) family.

Its subcellular location is the cell inner membrane. Its function is as follows. Forms an efflux pump with AaeA. Could function as a metabolic relief valve, allowing to eliminate certain compounds when they accumulate to high levels in the cell. The chain is p-hydroxybenzoic acid efflux pump subunit AaeB from Edwardsiella ictaluri (strain 93-146).